The chain runs to 381 residues: E3 ubiquitin-protein ligase RNF13 (381 aa).

Residues 1–34 (MLLSIGMLMLSATQVYTILTVQLFAFLNLLPVEA) form the signal peptide. The Lumenal portion of the chain corresponds to 35-182 (DILAYNFENA…VPELSLPLEY (148 aa)). In terms of domain architecture, PA spans 64 to 160 (LKGFLINSKP…GESSANSLKD (97 aa)). A glycan (N-linked (GlcNAc...) asparagine) is linked at Asn88. A helical transmembrane segment spans residues 183–203 (YLIPFLIIVGICLILIVIFMI). The Cytoplasmic portion of the chain corresponds to 204-381 (TKFVQDRHRN…EQDYNIANTV (178 aa)). The segment at 240-282 (CAICLEEYEDGDKLRILPCSHAYHCKCVDPWLTKTKKTCPVCK) adopts an RING-type; atypical zinc-finger fold. A disordered region spans residues 285-381 (VVPSQGDSDS…EQDYNIANTV (97 aa)). A compositionally biased stretch (polar residues) spans 317–328 (SARTQSFGSLSE). Acidic residues predominate over residues 339–357 (SDYEDDDNEETDSSDADNE). The span at 365 to 381 (VQLQPNGEQDYNIANTV) shows a compositional bias: polar residues.

As to quaternary structure, interacts with ERN1. In terms of processing, autoubiquitinated. N-glycosylated and also modified with chondroitin sulfate. In terms of tissue distribution, expressed in the brain, heart, kidney, liver and spleen. Higher expression in adult tissues compared to the embryonic counterparts.

It localises to the endoplasmic reticulum membrane. The protein localises to the late endosome membrane. Its subcellular location is the lysosome membrane. It is found in the nucleus inner membrane. It catalyses the reaction S-ubiquitinyl-[E2 ubiquitin-conjugating enzyme]-L-cysteine + [acceptor protein]-L-lysine = [E2 ubiquitin-conjugating enzyme]-L-cysteine + N(6)-ubiquitinyl-[acceptor protein]-L-lysine.. The protein operates within protein modification; protein ubiquitination. Functionally, E3 ubiquitin-protein ligase that regulates cell proliferation. Involved in apoptosis regulation. Mediates ER stress-induced activation of JNK signaling pathway and apoptosis by promoting ERN1 activation and splicing of XBP1 mRNA. Also involved in protein trafficking and localization. This is E3 ubiquitin-protein ligase RNF13 (Rnf13) from Mus musculus (Mouse).